A 304-amino-acid polypeptide reads, in one-letter code: Glycine--tRNA ligase alpha subunit (304 aa).

Belongs to the class-II aminoacyl-tRNA synthetase family. In terms of assembly, tetramer of two alpha and two beta subunits.

The protein resides in the cytoplasm. It carries out the reaction tRNA(Gly) + glycine + ATP = glycyl-tRNA(Gly) + AMP + diphosphate. This is Glycine--tRNA ligase alpha subunit from Tolumonas auensis (strain DSM 9187 / NBRC 110442 / TA 4).